The following is an 84-amino-acid chain: Beta-toxin Tf1a (84 aa).

A signal peptide spans 1-20 (MKGMILFISCLLLIGIVVEC). Residues 21 to 82 (KEGYLMDHEG…VWERATNRCG (62 aa)) form the LCN-type CS-alpha/beta domain. 4 disulfide bridges follow: cysteine 31–cysteine 81, cysteine 35–cysteine 57, cysteine 43–cysteine 62, and cysteine 47–cysteine 64. At cysteine 81 the chain carries Cysteine amide.

The protein belongs to the long (4 C-C) scorpion toxin superfamily. Sodium channel inhibitor family. Beta subfamily. In terms of tissue distribution, expressed by the venom gland.

The protein resides in the secreted. Beta toxins bind voltage-independently at site-4 of sodium channels (Nav) and shift the voltage of activation toward more negative potentials thereby affecting sodium channel activation and promoting spontaneous and repetitive firing. The toxin induces a leftward shift, on all channels tested (including Blattella germanica and Varroa destructor Nav1), displacing a change in voltage dependence activation to more hyperpolarized potentials. In addition, the toxin mostly inhibits peak current of hNav1.4/SCN4A (53% inhibition of peak current at 100 nM) and hNav1.5/SCN5A (71% inhibition). This is Beta-toxin Tf1a from Tityus fasciolatus (Central Brazilian scorpion).